A 275-amino-acid polypeptide reads, in one-letter code: Large ribosomal subunit protein uL2 (275 aa).

The disordered stretch occupies residues 212-275 (NRHRGIRPQT…DKLIISRRKK (64 aa)). Residues 257–275 (YKTRRKKPSDKLIISRRKK) are compositionally biased toward basic residues.

It belongs to the universal ribosomal protein uL2 family. In terms of assembly, part of the 50S ribosomal subunit. Forms a bridge to the 30S subunit in the 70S ribosome.

One of the primary rRNA binding proteins. Required for association of the 30S and 50S subunits to form the 70S ribosome, for tRNA binding and peptide bond formation. It has been suggested to have peptidyltransferase activity; this is somewhat controversial. Makes several contacts with the 16S rRNA in the 70S ribosome. This Nitratiruptor sp. (strain SB155-2) protein is Large ribosomal subunit protein uL2.